An 887-amino-acid chain; its full sequence is Centrobin (887 aa).

The disordered stretch occupies residues 1-34 (MATAAPSPSSPLRPEDLLSDSSEPPGLNQVSSEV). Serine 81 is subject to Phosphoserine. 4 disordered regions span residues 110–153 (MLHT…PSSS), 465–486 (SLRQAASLRDHHRKQLQELSGQ), 566–591 (TLLPPNPQAPLAEPSSPGPLEPEKGE), and 636–695 (LGPP…LPPA). Basic and acidic residues predominate over residues 113–128 (TSRDTAYRTGSERREE). Positions 133–153 (SDSTATLLNTRPLQDLSPSSS) are enriched in polar residues. The stretch at 191–557 (RRKHCERHIQ…LQAMLQAHWE (367 aa)) forms a coiled coil. The required for centrosome localization stretch occupies residues 360–887 (QEHQLKERLQ…SMRSRGGIWR (528 aa)). A compositionally biased stretch (basic and acidic residues) spans 670–680 (TDDHRAERPFP). Position 782 is a phosphoserine (serine 782). The segment at 824-887 (GTDGQGELVP…SMRSRGGIWR (64 aa)) is disordered. A compositionally biased stretch (basic and acidic residues) spans 832–849 (VPRRNTDSRLGETTRKEI).

As to quaternary structure, interacts with LYST.

The protein resides in the cytoplasm. The protein localises to the cytoskeleton. Its subcellular location is the microtubule organizing center. It localises to the centrosome. It is found in the centriole. Required for centriole duplication. Inhibition of centriole duplication leading to defects in cytokinesis. The protein is Centrobin (Cntrob) of Mus musculus (Mouse).